We begin with the raw amino-acid sequence, 37 residues long: Large ribosomal subunit protein bL36 (37 aa).

The protein belongs to the bacterial ribosomal protein bL36 family.

The protein is Large ribosomal subunit protein bL36 of Acetivibrio thermocellus (strain ATCC 27405 / DSM 1237 / JCM 9322 / NBRC 103400 / NCIMB 10682 / NRRL B-4536 / VPI 7372) (Clostridium thermocellum).